Consider the following 453-residue polypeptide: Bifunctional protein GlmU (453 aa).

Positions 1–231 are pyrophosphorylase; sequence MERTCLAVIL…EIEMTGCNTR (231 aa). Residues 10 to 13, Lys-24, Gln-77, 82 to 83, 105 to 107, Gly-143, Glu-157, Asn-172, and Asn-229 contribute to the UDP-N-acetyl-alpha-D-glucosamine site; these read LAAG, GT, and YGD. Asp-107 is a binding site for Mg(2+). Asn-229 contributes to the Mg(2+) binding site. The segment at 232-252 is linker; the sequence is AELAVIERFWQERRRHQMMLS. Positions 253–453 are N-acetyltransferase; that stretch reads GVTMIAPETV…AIKAAKKAKA (201 aa). UDP-N-acetyl-alpha-D-glucosamine contacts are provided by Arg-318 and Lys-336. His-348 (proton acceptor) is an active-site residue. 2 residues coordinate UDP-N-acetyl-alpha-D-glucosamine: Tyr-351 and Asn-362. Residues Ala-365, 371-372, Ser-390, Ser-408, and Arg-425 each bind acetyl-CoA; that span reads NY.

In the N-terminal section; belongs to the N-acetylglucosamine-1-phosphate uridyltransferase family. The protein in the C-terminal section; belongs to the transferase hexapeptide repeat family. Homotrimer. Requires Mg(2+) as cofactor.

It is found in the cytoplasm. It carries out the reaction alpha-D-glucosamine 1-phosphate + acetyl-CoA = N-acetyl-alpha-D-glucosamine 1-phosphate + CoA + H(+). The catalysed reaction is N-acetyl-alpha-D-glucosamine 1-phosphate + UTP + H(+) = UDP-N-acetyl-alpha-D-glucosamine + diphosphate. The protein operates within nucleotide-sugar biosynthesis; UDP-N-acetyl-alpha-D-glucosamine biosynthesis; N-acetyl-alpha-D-glucosamine 1-phosphate from alpha-D-glucosamine 6-phosphate (route II): step 2/2. It functions in the pathway nucleotide-sugar biosynthesis; UDP-N-acetyl-alpha-D-glucosamine biosynthesis; UDP-N-acetyl-alpha-D-glucosamine from N-acetyl-alpha-D-glucosamine 1-phosphate: step 1/1. Its pathway is bacterial outer membrane biogenesis; LPS lipid A biosynthesis. Functionally, catalyzes the last two sequential reactions in the de novo biosynthetic pathway for UDP-N-acetylglucosamine (UDP-GlcNAc). The C-terminal domain catalyzes the transfer of acetyl group from acetyl coenzyme A to glucosamine-1-phosphate (GlcN-1-P) to produce N-acetylglucosamine-1-phosphate (GlcNAc-1-P), which is converted into UDP-GlcNAc by the transfer of uridine 5-monophosphate (from uridine 5-triphosphate), a reaction catalyzed by the N-terminal domain. The sequence is that of Bifunctional protein GlmU from Rhizobium johnstonii (strain DSM 114642 / LMG 32736 / 3841) (Rhizobium leguminosarum bv. viciae).